The sequence spans 442 residues: Probable alpha-galactosidase B (442 aa).

The N-terminal stretch at 1–19 (MQRYISLSVSLSLLSGANA) is a signal peptide. Intrachain disulfides connect cysteine 42–cysteine 74 and cysteine 124–cysteine 154. Aspartate 152 functions as the Nucleophile in the catalytic mechanism. Asparagine 159, asparagine 173, asparagine 179, and asparagine 215 each carry an N-linked (GlcNAc...) asparagine glycan. 224–228 (EWGQA) serves as a coordination point for substrate. Asparagine 235 carries N-linked (GlcNAc...) asparagine glycosylation. Aspartate 246 (proton donor) is an active-site residue. N-linked (GlcNAc...) asparagine glycosylation is present at asparagine 285.

It belongs to the glycosyl hydrolase 27 family.

It is found in the secreted. The enzyme catalyses Hydrolysis of terminal, non-reducing alpha-D-galactose residues in alpha-D-galactosides, including galactose oligosaccharides, galactomannans and galactolipids.. Functionally, hydrolyzes a variety of simple alpha-D-galactoside as well as more complex molecules such as oligosaccharides and polysaccharides. The polypeptide is Probable alpha-galactosidase B (aglB) (Aspergillus oryzae (strain ATCC 42149 / RIB 40) (Yellow koji mold)).